The primary structure comprises 704 residues: Pentatricopeptide repeat-containing protein At1g56690, mitochondrial (704 aa).

The N-terminal 12 residues, 1-12, are a transit peptide targeting the mitochondrion; that stretch reads MKRLKLILRRTY. 15 PPR repeats span residues 16-46, 47-81, 82-108, 109-143, 144-170, 171-205, 206-232, 233-267, 268-294, 295-329, 330-364, 365-395, 396-430, 431-465, and 467-497; these read TGVN…LQFK, AIGS…NVVS, WNGL…MPER, NVVS…NEVS, WTVM…MPVK, DVVA…NVVT, WTTM…MPEK, TEVS…PVIA, CNAM…MEDR, DNAT…GVRP, SFPS…QFDD, DVYV…FSSK, DIIM…GTMP, NKVT…FCVT, and TVEH…MTIK. A type E motif region spans residues 502 to 577; sequence VWGALLGACK…FPGCSWIEVG (76 aa). Positions 578–609 are type E(+) motif; that stretch reads KKVHMFTRGGIKNHPEQAMILMMLEKTDGLLR. The interval 610-704 is type DYW motif; sequence EAGYSPDCSH…NGECSCRDYW (95 aa).

It belongs to the PPR family. PCMP-H subfamily.

The protein localises to the mitochondrion. This is Pentatricopeptide repeat-containing protein At1g56690, mitochondrial (PCMP-H69) from Arabidopsis thaliana (Mouse-ear cress).